We begin with the raw amino-acid sequence, 471 residues long: Glutamate--tRNA ligase 1 (471 aa).

The 'HIGH' region signature appears at 10-20 (PSPTGYLHIGG). Residues cysteine 99, cysteine 101, cysteine 126, and aspartate 128 each contribute to the Zn(2+) site. A 'KMSKS' region motif is present at residues 238-242 (RLSKR). Lysine 241 contributes to the ATP binding site.

Belongs to the class-I aminoacyl-tRNA synthetase family. Glutamate--tRNA ligase type 1 subfamily. As to quaternary structure, monomer. Requires Zn(2+) as cofactor.

It localises to the cytoplasm. The catalysed reaction is tRNA(Glu) + L-glutamate + ATP = L-glutamyl-tRNA(Glu) + AMP + diphosphate. Catalyzes the attachment of glutamate to tRNA(Glu) in a two-step reaction: glutamate is first activated by ATP to form Glu-AMP and then transferred to the acceptor end of tRNA(Glu). The polypeptide is Glutamate--tRNA ligase 1 (Alkalilimnicola ehrlichii (strain ATCC BAA-1101 / DSM 17681 / MLHE-1)).